The sequence spans 330 residues: Ketol-acid reductoisomerase (NADP(+)) (330 aa).

Residues 2 to 181 (AKVYYDNDVN…GATRAGVIET (180 aa)) form the KARI N-terminal Rossmann domain. Residues 25-28 (YGSQ), R48, S52, and 82-85 (DEVQ) each bind NADP(+). Residue H107 is part of the active site. Residue G133 participates in NADP(+) binding. A KARI C-terminal knotted domain is found at 182–327 (TFKEETETDL…ADLRMMMPFI (146 aa)). Residues D190, E194, E226, and E230 each contribute to the Mg(2+) site. S251 contacts substrate.

Belongs to the ketol-acid reductoisomerase family. Mg(2+) serves as cofactor.

It catalyses the reaction (2R)-2,3-dihydroxy-3-methylbutanoate + NADP(+) = (2S)-2-acetolactate + NADPH + H(+). The catalysed reaction is (2R,3R)-2,3-dihydroxy-3-methylpentanoate + NADP(+) = (S)-2-ethyl-2-hydroxy-3-oxobutanoate + NADPH + H(+). It functions in the pathway amino-acid biosynthesis; L-isoleucine biosynthesis; L-isoleucine from 2-oxobutanoate: step 2/4. Its pathway is amino-acid biosynthesis; L-valine biosynthesis; L-valine from pyruvate: step 2/4. In terms of biological role, involved in the biosynthesis of branched-chain amino acids (BCAA). Catalyzes an alkyl-migration followed by a ketol-acid reduction of (S)-2-acetolactate (S2AL) to yield (R)-2,3-dihydroxy-isovalerate. In the isomerase reaction, S2AL is rearranged via a Mg-dependent methyl migration to produce 3-hydroxy-3-methyl-2-ketobutyrate (HMKB). In the reductase reaction, this 2-ketoacid undergoes a metal-dependent reduction by NADPH to yield (R)-2,3-dihydroxy-isovalerate. This chain is Ketol-acid reductoisomerase (NADP(+)), found in Macrococcus caseolyticus (strain JCSC5402) (Macrococcoides caseolyticum).